The chain runs to 258 residues: MKLVYSTDCEYHIGLKASDIGHYVILPGDPARSEKIAQHFSHPHKVGHNREYVTYTGTLCETPVSVMSTGIGGPSTAIGVEELIHLGAHTFIRVGTSGGMQPDILAGTVVIATGAIRFEGTSKEYAPVEFPAVPDFTVTAALKHAAEDVQVRHALGVVQCKDNFYGQHSPHTMPVHAELTQKWHAWIACNTLASEMESAALFVLGSVRRVRTGAVLLVIGNQTRRAQGLEDIQVHDTENAIRVAVEAVKLLITQDSPR.

This sequence belongs to the PNP/UDP phosphorylase family.

The protein localises to the cytoplasm. The enzyme catalyses uridine + phosphate = alpha-D-ribose 1-phosphate + uracil. It participates in pyrimidine metabolism; UMP biosynthesis via salvage pathway; uracil from uridine (phosphorylase route): step 1/1. In terms of biological role, catalyzes the reversible phosphorylytic cleavage of uridine to uracil and ribose-1-phosphate. The chain is Uridine phosphorylase (udp) from Treponema pallidum (strain Nichols).